Consider the following 399-residue polypeptide: Elongation factor Tu 1 (399 aa).

The tr-type G domain occupies 10–209 (KPHVNIGTIG…QVDTYIPEPE (200 aa)). The interval 19–26 (GHVDHGKT) is G1. 19–26 (GHVDHGKT) is a GTP binding site. Residue threonine 26 participates in Mg(2+) binding. Residues 60–64 (GITIA) are G2. The tract at residues 81–84 (DCPG) is G3. GTP is bound by residues 81–85 (DCPGH) and 136–139 (NKAD). The interval 136-139 (NKAD) is G4. Residues 174–176 (SAL) are G5.

This sequence belongs to the TRAFAC class translation factor GTPase superfamily. Classic translation factor GTPase family. EF-Tu/EF-1A subfamily. As to quaternary structure, monomer.

Its subcellular location is the cytoplasm. The enzyme catalyses GTP + H2O = GDP + phosphate + H(+). Functionally, GTP hydrolase that promotes the GTP-dependent binding of aminoacyl-tRNA to the A-site of ribosomes during protein biosynthesis. The protein is Elongation factor Tu 1 of Syntrophotalea carbinolica (strain DSM 2380 / NBRC 103641 / GraBd1) (Pelobacter carbinolicus).